Reading from the N-terminus, the 1109-residue chain is ABC transporter G family member 28 (1109 aa).

The next 2 membrane-spanning stretches (helical) occupy residues 5 to 25 (NSYF…LILQ) and 291 to 311 (NITA…IILY). The interval 325–411 (QAKSREKAVQ…DTKKGKKKEK (87 aa)) is disordered. Basic and acidic residues predominate over residues 339–357 (SQSREKWKSAKDIAKKHAT). The ABC transporter domain occupies 499 to 741 (VAFKDLSITL…FSSLGIVVPE (243 aa)). 533 to 540 (GPSGAGKT) is an ATP binding site. Residues 859 to 1056 (QQYRYFLGRL…ALEAFVVSNA (198 aa)) form the ABC transmembrane type-2 domain. The next 6 membrane-spanning stretches (helical) occupy residues 879–899 (LAVD…LAKV), 904–924 (FGAM…KITA), 954–974 (TVDH…FYFF), 986–1006 (VVLI…AILF), 1008–1028 (PGPA…IATS), and 1084–1104 (CLVF…FCMV).

It belongs to the ABC transporter superfamily. ABCG family. Eye pigment precursor importer (TC 3.A.1.204) subfamily.

The protein localises to the membrane. This Arabidopsis thaliana (Mouse-ear cress) protein is ABC transporter G family member 28 (ABCG28).